We begin with the raw amino-acid sequence, 146 residues long: Large ribosomal subunit protein uL15 (146 aa).

The segment at M1–Q54 is disordered. 2 stretches are compositionally biased toward gly residues: residues R21–A31 and S42–G52.

The protein belongs to the universal ribosomal protein uL15 family. In terms of assembly, part of the 50S ribosomal subunit.

Functionally, binds to the 23S rRNA. This is Large ribosomal subunit protein uL15 from Clostridium botulinum (strain Eklund 17B / Type B).